Reading from the N-terminus, the 176-residue chain is Peptide methionine sulfoxide reductase MsrA (176 aa).

Cys-10 is an active-site residue.

Belongs to the MsrA Met sulfoxide reductase family.

It carries out the reaction L-methionyl-[protein] + [thioredoxin]-disulfide + H2O = L-methionyl-(S)-S-oxide-[protein] + [thioredoxin]-dithiol. The catalysed reaction is [thioredoxin]-disulfide + L-methionine + H2O = L-methionine (S)-S-oxide + [thioredoxin]-dithiol. Its function is as follows. Has an important function as a repair enzyme for proteins that have been inactivated by oxidation. Catalyzes the reversible oxidation-reduction of methionine sulfoxide in proteins to methionine. The protein is Peptide methionine sulfoxide reductase MsrA of Chromobacterium violaceum (strain ATCC 12472 / DSM 30191 / JCM 1249 / CCUG 213 / NBRC 12614 / NCIMB 9131 / NCTC 9757 / MK).